Consider the following 189-residue polypeptide: Elongation factor P (189 aa).

Belongs to the elongation factor P family.

It localises to the cytoplasm. The protein operates within protein biosynthesis; polypeptide chain elongation. Functionally, involved in peptide bond synthesis. Stimulates efficient translation and peptide-bond synthesis on native or reconstituted 70S ribosomes in vitro. Probably functions indirectly by altering the affinity of the ribosome for aminoacyl-tRNA, thus increasing their reactivity as acceptors for peptidyl transferase. This Orientia tsutsugamushi (strain Boryong) (Rickettsia tsutsugamushi) protein is Elongation factor P.